A 381-amino-acid polypeptide reads, in one-letter code: Endophilin-A homolog (381 aa).

The interval 1–21 (MSLSGLRKQFNKANQYLSETM) is membrane-binding amphipathic helix. In terms of domain architecture, BAR spans 18 to 247 (SETMGAAEPT…LGHRIKDAAA (230 aa)). Residues 170–238 (CKKRQQRRDD…QCLENLQQQL (69 aa)) adopt a coiled-coil conformation. The disordered stretch occupies residues 246-323 (AARPREEHVP…PPPLSQQQKP (78 aa)). Residues 260-271 (ANESRTPRSSFR) are compositionally biased toward polar residues. Residues 305–317 (YQGPPPGGLPPPL) show a composition bias toward pro residues. The SH3 domain maps to 320 to 379 (QQKPQCRALFDFDAQSEGELDFKEGTLIELVSQIDENWYEGRVNGKTGLFPVTYVQVLVP).

This sequence belongs to the endophilin family. As to quaternary structure, may form a homodimer (via the BAR domain). Expressed in neurons and posterior intestine.

The protein resides in the synapse. It is found in the cytoplasmic vesicle. The protein localises to the secretory vesicle. It localises to the synaptic vesicle. Its subcellular location is the membrane. Its function is as follows. Involved in synaptic vesicle (SV) recycling in neurons probably by regulating clathrin-mediated endocytosis. By controlling SV endocytosis, regulates the rate of excitatory postsynaptic currents (EPSCs) at neuromuscular junctions and thus locomotion. In a similar manner, involved in necrotic neuronal cell death induced by abnormal hyperactivation of ion channels. Plays a minor role in responses to mechanical stimuli. Plays a minor role in unc-26/synaptojanin localization to synapses. This chain is Endophilin-A homolog, found in Caenorhabditis elegans.